The sequence spans 125 residues: uncharacterized protein (125 aa).

The protein localises to the plastid. This is an uncharacterized protein from Euglena longa (Euglenophycean alga).